The primary structure comprises 381 residues: Transcription termination factor 4, mitochondrial (381 aa).

The N-terminal 42 residues, 1-42, are a transit peptide targeting the mitochondrion; that stretch reads MAAFGRQVLDWHRLIPLTWACMARQTPHLGEQRRTTASLLRK. MTERF repeat units lie at residues 142–172, 177–204, 209–239, 245–270, and 290–318; these read CVVL…LGLG, KRVL…LKEK, VQQV…YAYF, HPDI…YLER, and LKDI…VFKK. Residues 310 to 327 form a dimerization with NSUN4 region; sequence VEEFQVFKKLLAREEEES. The segment at 322–381 is disordered; that stretch reads REEEESESSTSDDKRASLDEDEDDDDEEDNDEDDNDEDDDDEDDDEAEDNDEDEDDDEEE. The segment covering 340 to 381 has biased composition (acidic residues); it reads DEDEDDDDEEDNDEDDNDEDDDDEDDDEAEDNDEDEDDDEEE.

It belongs to the mTERF family. As to quaternary structure, heterodimer with NSUN4; this interaction may be required for NSUN4 recruitment to the mitochondrial large ribosomal subunit. The mature mitochondrial protein exists in 2 forms differing at the level of their N-terminus, one is starting at residue 43 and the other at residue 48.

The protein resides in the mitochondrion. Regulator of mitochondrial ribosome biogenesis and translation. Binds to mitochondrial ribosomal RNAs 16S, 12S and 7S and targets NSUN4 RNA methyltransferase to the mitochondrial large ribosomal subunit (39S). This chain is Transcription termination factor 4, mitochondrial (MTERF4), found in Homo sapiens (Human).